An 89-amino-acid polypeptide reads, in one-letter code: Small ribosomal subunit protein uS15 (89 aa).

This sequence belongs to the universal ribosomal protein uS15 family. Part of the 30S ribosomal subunit. Forms a bridge to the 50S subunit in the 70S ribosome, contacting the 23S rRNA.

In terms of biological role, one of the primary rRNA binding proteins, it binds directly to 16S rRNA where it helps nucleate assembly of the platform of the 30S subunit by binding and bridging several RNA helices of the 16S rRNA. Its function is as follows. Forms an intersubunit bridge (bridge B4) with the 23S rRNA of the 50S subunit in the ribosome. This chain is Small ribosomal subunit protein uS15, found in Exiguobacterium sp. (strain ATCC BAA-1283 / AT1b).